Consider the following 356-residue polypeptide: Branched-chain-amino-acid transaminase 1 (356 aa).

Lysine 197 carries the post-translational modification N6-(pyridoxal phosphate)lysine.

Belongs to the class-IV pyridoxal-phosphate-dependent aminotransferase family. Pyridoxal 5'-phosphate is required as a cofactor.

The enzyme catalyses L-leucine + 2-oxoglutarate = 4-methyl-2-oxopentanoate + L-glutamate. It catalyses the reaction L-isoleucine + 2-oxoglutarate = (S)-3-methyl-2-oxopentanoate + L-glutamate. The catalysed reaction is L-valine + 2-oxoglutarate = 3-methyl-2-oxobutanoate + L-glutamate. It functions in the pathway amino-acid biosynthesis; L-isoleucine biosynthesis; L-isoleucine from 2-oxobutanoate: step 4/4. Its pathway is amino-acid biosynthesis; L-leucine biosynthesis; L-leucine from 3-methyl-2-oxobutanoate: step 4/4. It participates in amino-acid biosynthesis; L-valine biosynthesis; L-valine from pyruvate: step 4/4. Its activity is regulated as follows. Inhibited by canaline. In terms of biological role, transaminates branched-chain amino acids and ketoglutarate. Involved in the final step of the methionine regeneration pathway, where ketomethiobutyrate (KMTB) is converted to methionine via a transamination. The amino donor preference is isoleucine, leucine, valine, phenylalanine, and tyrosine. This is Branched-chain-amino-acid transaminase 1 (ilvE) from Bacillus subtilis (strain 168).